A 314-amino-acid polypeptide reads, in one-letter code: Putative S-adenosyl-L-methionine-dependent methyltransferase MAV_0301 (314 aa).

Residues D132 and D161–L162 each bind S-adenosyl-L-methionine.

This sequence belongs to the UPF0677 family.

Its function is as follows. Exhibits S-adenosyl-L-methionine-dependent methyltransferase activity. The sequence is that of Putative S-adenosyl-L-methionine-dependent methyltransferase MAV_0301 from Mycobacterium avium (strain 104).